We begin with the raw amino-acid sequence, 520 residues long: Cytochrome P450 4F3 (520 aa).

Residues 11 to 31 form a helical membrane-spanning segment; it reads LWPMAASPWLLLLLVGASWLL. Heme-binding residues include Glu328 and Cys468.

It belongs to the cytochrome P450 family. Heme serves as cofactor. As to expression, selectively expressed in blood neutrophils and bone marrow cells. Coexpressed with CYP4F3B in prostate, ileum and trachea. Selectively expressed in liver and kidney. It is also the predominant CYP4F isoform in trachea and tissues of the gastrointestinal tract.

It is found in the endoplasmic reticulum membrane. It localises to the microsome membrane. The catalysed reaction is an organic molecule + reduced [NADPH--hemoprotein reductase] + O2 = an alcohol + oxidized [NADPH--hemoprotein reductase] + H2O + H(+). It catalyses the reaction leukotriene B4 + reduced [NADPH--hemoprotein reductase] + O2 = 20-hydroxy-leukotriene B4 + oxidized [NADPH--hemoprotein reductase] + H2O + H(+). It carries out the reaction 20-hydroxy-leukotriene B4 + reduced [NADPH--hemoprotein reductase] + O2 = 20-oxo-leukotriene B4 + oxidized [NADPH--hemoprotein reductase] + 2 H2O + H(+). The enzyme catalyses 20-oxo-leukotriene B4 + reduced [NADPH--hemoprotein reductase] + O2 = 20-carboxy-leukotriene B4 + oxidized [NADPH--hemoprotein reductase] + H2O + 2 H(+). The catalysed reaction is (5Z,8Z,11Z)-eicosatrienoate + reduced [NADPH--hemoprotein reductase] + O2 = 20-hydroxy-(5Z,8Z,11Z)-eicosatrienoate + oxidized [NADPH--hemoprotein reductase] + H2O + H(+). It catalyses the reaction (5Z,8Z,11Z,14Z)-eicosatetraenoate + reduced [NADPH--hemoprotein reductase] + O2 = 20-hydroxy-(5Z,8Z,11Z,14Z)-eicosatetraenoate + oxidized [NADPH--hemoprotein reductase] + H2O + H(+). It carries out the reaction (5Z,8Z,11Z,14Z,17Z)-eicosapentaenoate + reduced [NADPH--hemoprotein reductase] + O2 = 19-hydroxy-(5Z,8Z,11Z,14Z,17Z)-eicosapentaenoate + oxidized [NADPH--hemoprotein reductase] + H2O + H(+). The enzyme catalyses (5Z,8Z,11Z,14Z,17Z)-eicosapentaenoate + reduced [NADPH--hemoprotein reductase] + O2 = 20-hydroxy-(5Z,8Z,11Z,14Z,17Z)-eicosapentaenoate + oxidized [NADPH--hemoprotein reductase] + H2O + H(+). The catalysed reaction is (4Z,7Z,10Z,13Z,16Z,19Z)-docosahexaenoate + reduced [NADPH--hemoprotein reductase] + O2 = 21-hydroxy-(4Z,7Z,10Z,13Z,16Z,19Z)-docosahexaenoate + oxidized [NADPH--hemoprotein reductase] + H2O + H(+). It catalyses the reaction (4Z,7Z,10Z,13Z,16Z,19Z)-docosahexaenoate + reduced [NADPH--hemoprotein reductase] + O2 = 22-hydroxy-(4Z,7Z,10Z,13Z,16Z,19Z)-docosahexaenoate + oxidized [NADPH--hemoprotein reductase] + H2O + H(+). It carries out the reaction 8,9-epoxy-(5Z,11Z,14Z)-eicosatrienoate + reduced [NADPH--hemoprotein reductase] + O2 = 20-hydroxy-8,9-epoxy-(5Z,11Z,14Z)-eicosatrienoate + oxidized [NADPH--hemoprotein reductase] + H2O + H(+). The enzyme catalyses 11,12-epoxy-(5Z,8Z,14Z)-eicosatrienoate + reduced [NADPH--hemoprotein reductase] + O2 = 20-hydroxy-11,12-epoxy-(5Z,8Z,14Z)-eicosatrienoate + oxidized [NADPH--hemoprotein reductase] + H2O + H(+). The catalysed reaction is 14,15-epoxy-(5Z,8Z,11Z)-eicosatrienoate + reduced [NADPH--hemoprotein reductase] + O2 = 20-hydroxy-14,15-epoxy-(5Z,8Z,11Z)-eicosatrienoate + oxidized [NADPH--hemoprotein reductase] + H2O + H(+). It catalyses the reaction 12,13-epoxy-(9Z)-octadecenoate + reduced [NADPH--hemoprotein reductase] + O2 = 18-hydroxy-12,13-epoxy-(9Z)-octadecenoate + oxidized [NADPH--hemoprotein reductase] + H2O + H(+). It carries out the reaction 9,10-epoxy-(12Z)-octadecenoate + reduced [NADPH--hemoprotein reductase] + O2 = 18-hydroxy-9,10-epoxy-(12Z)-octadecenoate + oxidized [NADPH--hemoprotein reductase] + H2O + H(+). The enzyme catalyses 9,10-epoxyoctadecanoate + reduced [NADPH--hemoprotein reductase] + O2 = 18-hydroxy-9,10-epoxy-octadecanoate + oxidized [NADPH--hemoprotein reductase] + H2O + H(+). The catalysed reaction is (12R)-hydroxy-(9Z)-octadecenoate + reduced [NADPH--hemoprotein reductase] + O2 = (12R),18-dihydroxy-(9Z)-octadecenoate + oxidized [NADPH--hemoprotein reductase] + H2O + H(+). It catalyses the reaction 12-hydroxyoctadecanoate + reduced [NADPH--hemoprotein reductase] + O2 = 12,18-dihydroxyoctadecanoate + oxidized [NADPH--hemoprotein reductase] + H2O + H(+). It carries out the reaction 5-hydroxy-(6E,8Z,11Z,14Z)-eicosatetraenoate + reduced [NADPH--hemoprotein reductase] + O2 = 5,20-dihydroxy-(6E,8Z,11Z,14Z)-eicosatetraenoate + oxidized [NADPH--hemoprotein reductase] + H2O + H(+). The enzyme catalyses 8-hydroxy-(5Z,9E,11Z,14Z)-eicosatetraenoate + reduced [NADPH--hemoprotein reductase] + O2 = 8,20-dihydroxy-(5Z,9E,11Z,14Z)-eicosatetraenoate + oxidized [NADPH--hemoprotein reductase] + H2O + H(+). The catalysed reaction is 12-hydroxy-(5Z,8Z,10E,14Z)-eicosatetraenoate + reduced [NADPH--hemoprotein reductase] + O2 = 12,20-dihydroxy-(5Z,8Z,10E,14Z)-eicosatetraenoate + oxidized [NADPH--hemoprotein reductase] + H2O + H(+). It catalyses the reaction 5-hydroxy-(6E,8Z,11Z,14Z,17Z)-eicosapentaenoate + reduced [NADPH--hemoprotein reductase] + O2 = 5,20-dihydroxy-(6E,8Z,11Z,14Z,17Z)-eicosapentaenoate + oxidized [NADPH--hemoprotein reductase] + H2O + H(+). It carries out the reaction lipoxin A4 + reduced [NADPH--hemoprotein reductase] + O2 = 20-hydroxy-lipoxin A4 + oxidized [NADPH--hemoprotein reductase] + H2O + H(+). The enzyme catalyses lipoxin B4 + reduced [NADPH--hemoprotein reductase] + O2 = 20-hydroxy-lipoxin B4 + oxidized [NADPH--hemoprotein reductase] + H2O + H(+). The catalysed reaction is 22-hydroxydocosanoate + reduced [NADPH--hemoprotein reductase] + O2 = 22-oxodocosanoate + oxidized [NADPH--hemoprotein reductase] + 2 H2O + H(+). It catalyses the reaction 22-oxodocosanoate + reduced [NADPH--hemoprotein reductase] + O2 = docosanedioate + oxidized [NADPH--hemoprotein reductase] + H2O + 2 H(+). It carries out the reaction docosanoate + reduced [NADPH--hemoprotein reductase] + O2 = 22-hydroxydocosanoate + oxidized [NADPH--hemoprotein reductase] + H2O + H(+). The enzyme catalyses tetracosanoate + reduced [NADPH--hemoprotein reductase] + O2 = 24-hydroxytetracosanoate + oxidized [NADPH--hemoprotein reductase] + H2O + H(+). The catalysed reaction is hexacosanoate + reduced [NADPH--hemoprotein reductase] + O2 = 26-hydroxyhexacosanoate + oxidized [NADPH--hemoprotein reductase] + H2O + H(+). It catalyses the reaction 26-hydroxyhexacosanoate + reduced [NADPH--hemoprotein reductase] + O2 = 26-oxohexacosanoate + oxidized [NADPH--hemoprotein reductase] + 2 H2O + H(+). It carries out the reaction 26-oxohexacosanoate + reduced [NADPH--hemoprotein reductase] + O2 = hexacosanedioate + oxidized [NADPH--hemoprotein reductase] + H2O + 2 H(+). The enzyme catalyses 3-hydroxyoctadecanoate + reduced [NADPH--hemoprotein reductase] + O2 = 3,18-dihydroxyoctadecanoate + oxidized [NADPH--hemoprotein reductase] + H2O + H(+). The catalysed reaction is 3-hydroxyhexadecanoate + reduced [NADPH--hemoprotein reductase] + O2 = 3,16-dihydroxyhexadecanoate + oxidized [NADPH--hemoprotein reductase] + H2O + H(+). It functions in the pathway lipid metabolism; leukotriene B4 degradation. Its pathway is lipid metabolism; arachidonate metabolism. Inhibited by carbon monoxide (CO). Functionally, a cytochrome P450 monooxygenase involved in the metabolism of various endogenous substrates, including fatty acids and their oxygenated derivatives (oxylipins). Mechanistically, uses molecular oxygen inserting one oxygen atom into a substrate, and reducing the second into a water molecule, with two electrons provided by NADPH via cytochrome P450 reductase (CPR; NADPH-ferrihemoprotein reductase). May play a role in inactivation of pro-inflammatory and anti-inflammatory oxylipins during the resolution of inflammation. Catalyzes predominantly the oxidation of the terminal carbon (omega-oxidation) of oxylipins in myeloid cells, displaying higher affinity for arachidonate metabolite leukotriene B4 (LTB4). Inactivates LTB4 via three successive oxidative transformations to 20-hydroxy-LTB4, then to 20-oxo-LTB4 and to 20-carboxy-LTB4. Has omega-hydroxylase activity toward long-chain fatty acid epoxides with preference for 8,9-epoxy-(5Z,11Z,14Z)-eicosatrienoate (EET) and 9,10-epoxyoctadecanoate. Omega-hydroxylates monohydroxy polyunsaturated fatty acids (PUFAs), including hydroxyeicosatetraenoates (HETEs) and hydroxyeicosapentaenoates (HEPEs), to dihydroxy compounds. Contributes to the degradation of saturated very long-chain fatty acids (VLCFAs) such as docosanoic acid, by catalyzing successive omega-oxidations to the corresponding dicarboxylic acid, thereby initiating chain shortening. Has low hydroxylase activity toward PUFAs. In terms of biological role, catalyzes predominantly the oxidation of the terminal carbon (omega-oxidation) of polyunsaturated fatty acids (PUFAs). Participates in the conversion of arachidonic acid to 20-hydroxyeicosatetraenoic acid (20-HETE), a signaling molecule acting both as vasoconstrictive and natriuretic with overall effect on arterial blood pressure. Has high omega-hydroxylase activity toward other PUFAs, including eicosatrienoic acid (ETA), eicosapentaenoic acid (EPA) and docosahexaenoic acid (DHA). Can also catalyze the oxidation of the penultimate carbon (omega-1 oxidation) of PUFAs with lower efficiency. Contributes to the degradation of saturated very long-chain fatty acids (VLCFAs) such as docosanoic acid and hexacosanoic acid, by catalyzing successive omega-oxidations to the corresponding dicarboxylic acids, thereby initiating chain shortening. Omega-hydroxylates long-chain 3-hydroxy fatty acids, likely initiating the oxidative conversion to the corresponding 3-hydroxydicarboxylic fatty acids. Has omega-hydroxylase activity toward long-chain fatty acid epoxides with preference for 8,9-epoxy-(5Z,11Z,14Z)-eicosatrienoate (EET) and 9,10-epoxyoctadecanoate. This chain is Cytochrome P450 4F3, found in Homo sapiens (Human).